We begin with the raw amino-acid sequence, 332 residues long: 2,3-diketo-L-gulonate reductase (332 aa).

The active-site Proton donor is His44. Residues 168-174 (ITMVDMS), 224-225 (WK), and 304-306 (GHE) contribute to the NAD(+) site.

The protein belongs to the LDH2/MDH2 oxidoreductase family. DlgD subfamily. Homodimer.

The protein localises to the cytoplasm. It catalyses the reaction 3-dehydro-L-gulonate + NAD(+) = 2,3-dioxo-L-gulonate + NADH + H(+). The enzyme catalyses 3-dehydro-L-gulonate + NADP(+) = 2,3-dioxo-L-gulonate + NADPH + H(+). In terms of biological role, catalyzes the reduction of 2,3-diketo-L-gulonate in the presence of NADH, to form 3-keto-L-gulonate. This is 2,3-diketo-L-gulonate reductase from Salmonella paratyphi B (strain ATCC BAA-1250 / SPB7).